A 668-amino-acid polypeptide reads, in one-letter code: S-adenosyl-L-methionine-dependent tRNA 4-demethylwyosine synthase TYW1B (668 aa).

The Flavodoxin-like domain maps to 37 to 191 (CVQIVIEMQG…NFRAWKTKFI (155 aa)). FMN contacts are provided by residues 43-47 (EMQGF) and 130-162 (VFGL…HRVM). Residues 202-269 (RKKSCGGHCK…QSLNSIVDVE (68 aa)) form a disordered region. Basic and acidic residues-rich tracts occupy residues 213–223 (GKCESHQHGSE) and 233–243 (DELHHRDTKEE). Acidic residues predominate over residues 244-255 (EPFESSSEEEFG). In terms of domain architecture, Radical SAM core spans 336–580 (LWNESHRCME…VDLIPEYEIA (245 aa)). [4Fe-4S] cluster contacts are provided by C352, C356, and C359.

This sequence belongs to the TYW1 family. [4Fe-4S] cluster is required as a cofactor.

It catalyses the reaction N(1)-methylguanosine(37) in tRNA(Phe) + pyruvate + S-adenosyl-L-methionine = 4-demethylwyosine(37) in tRNA(Phe) + 5'-deoxyadenosine + L-methionine + CO2 + H2O. It participates in tRNA modification; wybutosine-tRNA(Phe) biosynthesis. Its function is as follows. Probable component of the wybutosine biosynthesis pathway. Wybutosine is a hyper modified guanosine with a tricyclic base found at the 3'-position adjacent to the anticodon of eukaryotic phenylalanine tRNA. Catalyzes the condensation of N-methylguanine with 2 carbon atoms from pyruvate to form the tricyclic 4-demethylwyosine, an intermediate in wybutosine biosynthesis. The chain is S-adenosyl-L-methionine-dependent tRNA 4-demethylwyosine synthase TYW1B (TYW1B) from Homo sapiens (Human).